Consider the following 542-residue polypeptide: CTP synthase (542 aa).

Positions 1–265 are amidoligase domain; the sequence is MARYVFITGG…DDEVLAAFGI (265 aa). S13 contributes to the CTP binding site. UTP is bound at residue S13. ATP-binding positions include 14 to 19 and D71; that span reads SLGKGI. The Mg(2+) site is built by D71 and E139. CTP contacts are provided by residues 146 to 148, 186 to 191, and K222; these read DIE and KTKPTQ. UTP-binding positions include 186–191 and K222; that span reads KTKPTQ. Residues 291–541 form the Glutamine amidotransferase type-1 domain; it reads TIAIVGKYTG…IEAATEQSRL (251 aa). G353 is an L-glutamine binding site. C380 acts as the Nucleophile; for glutamine hydrolysis in catalysis. Residues 381 to 384, E404, and R469 contribute to the L-glutamine site; that span reads FGMQ. Active-site residues include H514 and E516.

This sequence belongs to the CTP synthase family. Homotetramer.

The catalysed reaction is UTP + L-glutamine + ATP + H2O = CTP + L-glutamate + ADP + phosphate + 2 H(+). The enzyme catalyses L-glutamine + H2O = L-glutamate + NH4(+). It catalyses the reaction UTP + NH4(+) + ATP = CTP + ADP + phosphate + 2 H(+). It participates in pyrimidine metabolism; CTP biosynthesis via de novo pathway; CTP from UDP: step 2/2. With respect to regulation, allosterically activated by GTP, when glutamine is the substrate; GTP has no effect on the reaction when ammonia is the substrate. The allosteric effector GTP functions by stabilizing the protein conformation that binds the tetrahedral intermediate(s) formed during glutamine hydrolysis. Inhibited by the product CTP, via allosteric rather than competitive inhibition. In terms of biological role, catalyzes the ATP-dependent amination of UTP to CTP with either L-glutamine or ammonia as the source of nitrogen. Regulates intracellular CTP levels through interactions with the four ribonucleotide triphosphates. This chain is CTP synthase, found in Rhizobium etli (strain CIAT 652).